A 293-amino-acid chain; its full sequence is ATP synthase gamma chain (293 aa).

This sequence belongs to the ATPase gamma chain family. As to quaternary structure, F-type ATPases have 2 components, CF(1) - the catalytic core - and CF(0) - the membrane proton channel. CF(1) has five subunits: alpha(3), beta(3), gamma(1), delta(1), epsilon(1). CF(0) has three main subunits: a, b and c.

The protein resides in the cell inner membrane. Its function is as follows. Produces ATP from ADP in the presence of a proton gradient across the membrane. The gamma chain is believed to be important in regulating ATPase activity and the flow of protons through the CF(0) complex. The polypeptide is ATP synthase gamma chain (Nitrosospira multiformis (strain ATCC 25196 / NCIMB 11849 / C 71)).